The chain runs to 420 residues: D-tagatose-1,6-bisphosphate aldolase subunit GatZ (420 aa).

It belongs to the GatZ/KbaZ family. GatZ subfamily. In terms of assembly, forms a complex with GatY.

It functions in the pathway carbohydrate metabolism; D-tagatose 6-phosphate degradation; D-glyceraldehyde 3-phosphate and glycerone phosphate from D-tagatose 6-phosphate: step 2/2. In terms of biological role, component of the tagatose-1,6-bisphosphate aldolase GatYZ that is required for full activity and stability of the Y subunit. Could have a chaperone-like function for the proper and stable folding of GatY. When expressed alone, GatZ does not show any aldolase activity. Is involved in the catabolism of galactitol. The polypeptide is D-tagatose-1,6-bisphosphate aldolase subunit GatZ (Escherichia coli (strain SE11)).